The chain runs to 435 residues: Casein kinase 1-like protein 12 (435 aa).

A Protein kinase domain is found at 9 to 278 (YRLGRKIGSG…LKRIFRDLFI (270 aa)). Residues 15–23 (IGSGSFGEI) and Lys-38 contribute to the ATP site. The active-site Proton acceptor is Asp-128. Disordered regions lie at residues 313–363 (VGTS…RGPM) and 394–414 (LRNSPVVTTPEGKRSSSTRKH).

The protein belongs to the protein kinase superfamily. CK1 Ser/Thr protein kinase family. Casein kinase I subfamily. As to quaternary structure, monomer. Autophosphorylated.

The protein resides in the cytoplasm. It carries out the reaction L-seryl-[protein] + ATP = O-phospho-L-seryl-[protein] + ADP + H(+). The enzyme catalyses L-threonyl-[protein] + ATP = O-phospho-L-threonyl-[protein] + ADP + H(+). Functionally, casein kinases are operationally defined by their preferential utilization of acidic proteins such as caseins as substrates. It can phosphorylate a large number of proteins. This is Casein kinase 1-like protein 12 from Arabidopsis thaliana (Mouse-ear cress).